The following is a 274-amino-acid chain: Dermonecrotic toxin SdSicTox-betaIIB1bviii (274 aa).

H5 is an active-site residue. The Mg(2+) site is built by E25 and D27. The Nucleophile role is filled by H41. Intrachain disulfides connect C45–C51 and C47–C190. Residue D85 coordinates Mg(2+).

It belongs to the arthropod phospholipase D family. Class II subfamily. The cofactor is Mg(2+). As to expression, expressed by the venom gland.

The protein localises to the secreted. It catalyses the reaction an N-(acyl)-sphingosylphosphocholine = an N-(acyl)-sphingosyl-1,3-cyclic phosphate + choline. It carries out the reaction an N-(acyl)-sphingosylphosphoethanolamine = an N-(acyl)-sphingosyl-1,3-cyclic phosphate + ethanolamine. The catalysed reaction is a 1-acyl-sn-glycero-3-phosphocholine = a 1-acyl-sn-glycero-2,3-cyclic phosphate + choline. The enzyme catalyses a 1-acyl-sn-glycero-3-phosphoethanolamine = a 1-acyl-sn-glycero-2,3-cyclic phosphate + ethanolamine. In terms of biological role, dermonecrotic toxins cleave the phosphodiester linkage between the phosphate and headgroup of certain phospholipids (sphingolipid and lysolipid substrates), forming an alcohol (often choline) and a cyclic phosphate. This toxin acts on sphingomyelin (SM). It may also act on ceramide phosphoethanolamine (CPE), lysophosphatidylcholine (LPC) and lysophosphatidylethanolamine (LPE), but not on lysophosphatidylserine (LPS), and lysophosphatidylglycerol (LPG). It acts by transphosphatidylation, releasing exclusively cyclic phosphate products as second products. Induces dermonecrosis, hemolysis, increased vascular permeability, edema, inflammatory response, and platelet aggregation. The protein is Dermonecrotic toxin SdSicTox-betaIIB1bviii of Sicarius cf. damarensis (strain GJB-2008) (Six-eyed sand spider).